Consider the following 705-residue polypeptide: Elongation factor G (705 aa).

The tr-type G domain occupies 8–290; that stretch reads HRYRNIGIMA…GVIHLLPSPA (283 aa). Residues 17–24, 88–92, and 142–145 contribute to the GTP site; these read AHIDAGKT, DTPGH, and NKMD.

Belongs to the TRAFAC class translation factor GTPase superfamily. Classic translation factor GTPase family. EF-G/EF-2 subfamily.

The protein resides in the cytoplasm. In terms of biological role, catalyzes the GTP-dependent ribosomal translocation step during translation elongation. During this step, the ribosome changes from the pre-translocational (PRE) to the post-translocational (POST) state as the newly formed A-site-bound peptidyl-tRNA and P-site-bound deacylated tRNA move to the P and E sites, respectively. Catalyzes the coordinated movement of the two tRNA molecules, the mRNA and conformational changes in the ribosome. This is Elongation factor G from Xylella fastidiosa (strain M23).